Here is a 125-residue protein sequence, read N- to C-terminus: Snaclec VP12 subunit B (125 aa).

Disulfide bonds link C4-C15, C32-C121, and C98-C113. A C-type lectin domain is found at 11–122 (FEKYCYKVFQ…CNDPRYFVCK (112 aa)).

It belongs to the snaclec family. As to quaternary structure, heterodimer of subunits alpha and beta; disulfide-linked. As to expression, expressed by the venom gland.

It is found in the secreted. In terms of biological role, inhibits integrin alpha-2/beta-1- (ITGA2/ITGB1) dependent melanoma metastasis. The polypeptide is Snaclec VP12 subunit B (Daboia palaestinae (Palestine viper)).